A 323-amino-acid chain; its full sequence is tRNA uridine(34) hydroxylase (323 aa).

One can recognise a Rhodanese domain in the interval 127–221 (QDENTVVLDA…YGQDPEVQGD (95 aa)). Cysteine 181 functions as the Cysteine persulfide intermediate in the catalytic mechanism.

Belongs to the TrhO family.

It catalyses the reaction uridine(34) in tRNA + AH2 + O2 = 5-hydroxyuridine(34) in tRNA + A + H2O. Catalyzes oxygen-dependent 5-hydroxyuridine (ho5U) modification at position 34 in tRNAs. The protein is tRNA uridine(34) hydroxylase of Oceanobacillus iheyensis (strain DSM 14371 / CIP 107618 / JCM 11309 / KCTC 3954 / HTE831).